Reading from the N-terminus, the 707-residue chain is MGEQRLARSSFLWGLSGIYLVAFVSLYAQIPGLYGREGILPAWKMMRFTGKGFWEQLKDSPSLLWFGPRLGLDTEMTMEMICLLGALLSLGALLFSFLRDSLVFLLLWIFYLSLYQVGQVFLYFQWDSLLLETGFLAVLVAPVHALRWKTSVWSSHDGVTFWLTRWLLFRLMFASGIVKLTSRCPTWWGLTALTYHYETQCIPNPAAWFAHQLPVWFQKFSVVATYFIEIGVPLLFFLPFRRLRLFSFYSQVVLQILIIMTGNYNFFNLLTVVLCCSLLDDQHITFFQRHKKPQHKGGRVTSAFSLYSLISLLDVPIFGLLVFWTVKYFDLQINWEKHSVESRTAFTYHDFQQWLRTITFPTIWIAAASLGWEILKGMYRSASVRGIFWKLWSTLQWVIFSCAAVAMFTISLVPYTYIDFESNGHLWPEVHRMFNAVDRYQLVNSYGLFRRMTGVGGRPEVIVEGSYDRETWTEIEFMYKPGNISTTPSVIIPHQPRLDWQMWFAALAHNSHSPWFASFVYRLLQGNKDVIHLVQNDESLYPFHAYPPTYIRAQLYKYWFTEVDQSGQMPKSWWRRRHVEEFFPAVFLGDPFLDNLLTQHGLKDKPPARRSLDAPIPSALRLIRAFLHPLPAPLLLHSFIFGIFTIYFLQAMFGGVSKPGVAKQRHSKPPNEKKKQKSNSGQGESAAAKSSGHGADTVRRNKKNEKS.

The next 9 membrane-spanning stretches (helical) occupy residues 11–31 (FLWG…AQIP), 78–98 (MEMI…FSFL), 102–122 (LVFL…QVFL), 126–146 (WDSL…VHAL), 220–240 (FSVV…FLPF), 256–276 (ILII…VLCC), 306–326 (LYSL…FWTV), 358–378 (ITFP…LKGM), and 398–418 (VIFS…YTYI). A glycan (N-linked (GlcNAc...) asparagine) is linked at asparagine 483. The helical transmembrane segment at 634–654 (LLLHSFIFGIFTIYFLQAMFG) threads the bilayer. The segment at 659–707 (PGVAKQRHSKPPNEKKKQKSNSGQGESAAAKSSGHGADTVRRNKKNEKS) is disordered. The span at 696–707 (DTVRRNKKNEKS) shows a compositional bias: basic and acidic residues.

It belongs to the lipase maturation factor family.

It localises to the endoplasmic reticulum membrane. Involved in the maturation of specific proteins in the endoplasmic reticulum. This is Lipase maturation factor 2 (lmf2) from Xenopus tropicalis (Western clawed frog).